A 352-amino-acid chain; its full sequence is Minor capsid protein P14 (352 aa).

The segment at 122-214 is disordered; sequence YNEPAPKPKP…RPARRCDENP (93 aa). Basic residues predominate over residues 129 to 145; it reads PKPKPKPKPAPKPKPAP. Over residues 146 to 204 the composition is skewed to pro residues; sequence KPKPAPKPAPKPAPKPAPKPAPKPAPKPAPKPAPEPAPEPAPEPAPKPAPEPAPEPAPI. Residues 244-264 form a hydrophobic region; it reads WWLWGGIAILVIVLMIGGYFI.

Interacts with the major capsid protein.

The protein localises to the virion. Functionally, one of the minor capsid proteins that constitute a network internal to the major capsid proteins and outside the lipid membrane. The minor capsid protein P14 does not serve a cross-linking function between neighboring capsomers, it may play a role in the viral capsid assembly. The sequence is that of Minor capsid protein P14 from Chlorella (PBCV-1).